The primary structure comprises 137 residues: BolA-like protein 1 (137 aa).

The residue at position 81 (S81) is a Phosphoserine. A disordered region spans residues 114–137 (WRENSQLDTSPPCLGGNKKTLGTP).

This sequence belongs to the BolA/IbaG family. In terms of assembly, interacts with GLRX5. Widely expressed.

The protein resides in the mitochondrion. Acts as a mitochondrial iron-sulfur (Fe-S) cluster assembly factor that facilitates (Fe-S) cluster insertion into a subset of mitochondrial proteins. Probably acts together with the monothiol glutaredoxin GLRX5. May protect cells against oxidative stress. The protein is BolA-like protein 1 of Homo sapiens (Human).